The following is a 320-amino-acid chain: Arabinan endo-1,5-alpha-L-arabinosidase C (320 aa).

An N-terminal signal peptide occupies residues 1 to 15; it reads MKLALSLFLLSGSLA. The active-site Proton acceptor is aspartate 31. N-linked (GlcNAc...) asparagine glycosylation is found at asparagine 126 and asparagine 190. Glutamate 198 serves as the catalytic Proton donor.

Belongs to the glycosyl hydrolase 43 family.

Its subcellular location is the secreted. The enzyme catalyses Endohydrolysis of (1-&gt;5)-alpha-arabinofuranosidic linkages in (1-&gt;5)-arabinans.. The protein operates within glycan metabolism; L-arabinan degradation. Its function is as follows. Endo-1,5-alpha-L-arabinanase involved in degradation of pectin. Its preferred substrate is linear 1,5-alpha-L-arabinan. This is Arabinan endo-1,5-alpha-L-arabinosidase C (abnC) from Emericella nidulans (strain FGSC A4 / ATCC 38163 / CBS 112.46 / NRRL 194 / M139) (Aspergillus nidulans).